We begin with the raw amino-acid sequence, 284 residues long: MNAWNTIYDQFNPIAFSLGSIEVHWYGLAYACAIVTAFYMALRMIQKDPKRFPIERKEFESYFLWAELGIVLGARIGYILIYEPNSGYYLTHFWQIFNPFDSHGNFVGIRGMSYHGGLVGFLIASYLYSRKDLKKLLIYLDLIAISLPLGYVFGRIGNFLNQELVGRIVPKDSHLGQIIGIMVDNELRYPSQLIEAFLEGVIVFLMVMWAKKHTKTHGLLIVVYGLGYSLMRFIAEFYREPDSQMGVYFLNLSMGQILSLFMVIVSLGILLYATKNSKKIKENQ.

The next 7 membrane-spanning stretches (helical) occupy residues 14-34 (IAFS…ACAI), 62-82 (YFLW…ILIY), 106-126 (FVGI…IASY), 136-156 (LLIY…FGRI), 190-210 (PSQL…VMWA), 218-238 (GLLI…AEFY), and 252-272 (LSMG…ILLY). Residue Arg-155 coordinates a 1,2-diacyl-sn-glycero-3-phospho-(1'-sn-glycerol).

This sequence belongs to the Lgt family.

It localises to the cell inner membrane. It carries out the reaction L-cysteinyl-[prolipoprotein] + a 1,2-diacyl-sn-glycero-3-phospho-(1'-sn-glycerol) = an S-1,2-diacyl-sn-glyceryl-L-cysteinyl-[prolipoprotein] + sn-glycerol 1-phosphate + H(+). Its pathway is protein modification; lipoprotein biosynthesis (diacylglyceryl transfer). In terms of biological role, catalyzes the transfer of the diacylglyceryl group from phosphatidylglycerol to the sulfhydryl group of the N-terminal cysteine of a prolipoprotein, the first step in the formation of mature lipoproteins. The sequence is that of Phosphatidylglycerol--prolipoprotein diacylglyceryl transferase from Helicobacter pylori (strain ATCC 700392 / 26695) (Campylobacter pylori).